A 163-amino-acid chain; its full sequence is Phosphopantetheine adenylyltransferase (163 aa).

Ser-10 contributes to the substrate binding site. ATP-binding positions include 10-11 (SF) and His-18. Residues Lys-42, Leu-78, and Lys-92 each coordinate substrate. ATP-binding positions include 93–95 (GVR), Glu-103, and 127–133 (HAHVSSS).

This sequence belongs to the bacterial CoaD family. As to quaternary structure, homohexamer. Requires Mg(2+) as cofactor.

The protein localises to the cytoplasm. The catalysed reaction is (R)-4'-phosphopantetheine + ATP + H(+) = 3'-dephospho-CoA + diphosphate. Its pathway is cofactor biosynthesis; coenzyme A biosynthesis; CoA from (R)-pantothenate: step 4/5. Its function is as follows. Reversibly transfers an adenylyl group from ATP to 4'-phosphopantetheine, yielding dephospho-CoA (dPCoA) and pyrophosphate. This is Phosphopantetheine adenylyltransferase from Clavibacter michiganensis subsp. michiganensis (strain NCPPB 382).